The following is a 568-amino-acid chain: MSGAEGNTNKRTFRAVFRTLIILITLTILALSAAILYEVTHTSNGSESNNQVFDPTDTLNAITGNIKSMIALLNQILYNAAIALPLKIDSTESVLLAAIKDLQFSNPASQNCSSGGNLLNDALYINGINQYLLSNSFAGTVGLGPLLNIPSFIPSATAPGGCTRIPSFSLTKTHWCYSHNVILAGCADSKASNQYLAMGIVEQSSADFPFFRTMRTLYLSDGINRKSCSIVAIPGGCALYCYVATKTEQEDYAATTPSELRLTFYYYNETLVERTLTIPNVTGNWATLNPAVGSGVYHLGYLAFPVYGGLIQNSAAWNSQFGSYFLPQNPAVQCSGSAEQQINTAKGSYVVNWFSGRLIQSAVLVCPLSDQLTDQCRVVLFNNSETMMGAEGRLYTIGGDLYYYQRSSSWWTASLLYKINTDFSQGLPPLIEAQWVPTYLVPRPGAQPCSAGNFCPANCITGVYADVWPMNNPFPAGSSGVNPNYLFGGAFLWADVARVNPTFYMASATQYKNTTGFPNSNQKAAYTSTTCFQNTGSKKIYCLFIIEMGSSLMGEFQIVPFLREVIIT.

Topologically, residues 1-18 (MSGAEGNTNKRTFRAVFR) are intravirion. A helical transmembrane segment spans residues 19 to 39 (TLIILITLTILALSAAILYEV). Residues 40 to 568 (THTSNGSESN…VPFLREVIIT (529 aa)) lie on the Virion surface side of the membrane. N-linked (GlcNAc...) asparagine; by host glycans are attached at residues N44 and N111. Disulfide bonds link C162–C186, C176–C237, and C228–C241. The interval 224-229 (NRKSCS) is involved in neuraminidase activity. N268 and N280 each carry an N-linked (GlcNAc...) asparagine; by host glycan. 3 disulfide bridges follow: C334–C455, C366–C376, and C449–C459. N382 carries an N-linked (GlcNAc...) asparagine; by host glycan. N513 is a glycosylation site (N-linked (GlcNAc...) asparagine; by host). Residues C531 and C542 are joined by a disulfide bond.

Belongs to the paramyxoviruses hemagglutinin-neuraminidase family. As to quaternary structure, homotetramer; composed of disulfide-linked homodimers.

The protein localises to the virion membrane. It localises to the host cell membrane. It catalyses the reaction Hydrolysis of alpha-(2-&gt;3)-, alpha-(2-&gt;6)-, alpha-(2-&gt;8)- glycosidic linkages of terminal sialic acid residues in oligosaccharides, glycoproteins, glycolipids, colominic acid and synthetic substrates.. Functionally, attaches the virus to sialic acid-containing cell receptors and thereby initiating infection. Binding of HN protein to the receptor induces a conformational change that allows the F protein to trigger virion/cell membranes fusion. In terms of biological role, neuraminidase activity ensures the efficient spread of the virus by dissociating the mature virions from the neuraminic acid containing glycoproteins. In Simiiformes (SV41), this protein is Hemagglutinin-neuraminidase (HN).